The following is a 455-amino-acid chain: Golgi pH regulator (455 aa).

The next 5 helical transmembrane spans lie at 5 to 25, 46 to 66, 79 to 99, 114 to 134, and 150 to 170; these read IDSSIMITSQILFFGFGWLFF, VTFAFSCTMFELIIFEILGVL, LCVILLILVFMVPFYIGYFIV, CLLWLTFMYFFWKLGDPFPIL, and VGVIGVTLMALLSGFGAVNCP. N-linked (GlcNAc...) asparagine glycosylation occurs at asparagine 180. Transmembrane regions (helical) follow at residues 288-308, 343-363, 378-398, and 425-445; these read FLGYFFSIYCVWKIFMATINI, ISFILVGIIIVTSIRGLLITL, VIVLLLAQIMGMYFVSSVLLI, and WFDVIFLVSALSSILFLYLAH.

The protein belongs to the Golgi pH regulator (TC 1.A.38) family. Homotrimer. Interacts with RABL3; the interaction stabilizes GPR89.

It localises to the golgi apparatus membrane. It catalyses the reaction iodide(out) = iodide(in). The catalysed reaction is chloride(in) = chloride(out). The enzyme catalyses bromide(in) = bromide(out). It carries out the reaction fluoride(in) = fluoride(out). Its function is as follows. Voltage-gated channel that enables the transfer of monoatomic anions such as iodide, chloride, bromide and fluoride which may function in counter-ion conductance and participates in Golgi acidification. Plays a role in lymphocyte development, probably by acting as a RABL3 effector in hematopoietic cells. In Mus musculus (Mouse), this protein is Golgi pH regulator.